Consider the following 509-residue polypeptide: tRNA-2-methylthio-N(6)-dimethylallyladenosine synthase (509 aa).

A disordered region spans residues 1–21; the sequence is MNEKQKLESGQVHPSDKKSEK. Residues 66–184 enclose the MTTase N-terminal domain; that stretch reads RKFYIRTYGC…LPELLSEAYL (119 aa). [4Fe-4S] cluster contacts are provided by Cys75, Cys111, Cys145, Cys221, Cys225, and Cys228. A Radical SAM core domain is found at 207 to 437; the sequence is RNGKIKGWVN…NALVNEISAK (231 aa). The 64-residue stretch at 440-503 folds into the TRAM domain; it reads KEYEGKVVEV…TWSLDGEMVG (64 aa).

Belongs to the methylthiotransferase family. MiaB subfamily. In terms of assembly, monomer. It depends on [4Fe-4S] cluster as a cofactor.

The protein localises to the cytoplasm. The catalysed reaction is N(6)-dimethylallyladenosine(37) in tRNA + (sulfur carrier)-SH + AH2 + 2 S-adenosyl-L-methionine = 2-methylsulfanyl-N(6)-dimethylallyladenosine(37) in tRNA + (sulfur carrier)-H + 5'-deoxyadenosine + L-methionine + A + S-adenosyl-L-homocysteine + 2 H(+). It catalyses the reaction N(6)-dimethylallyladenosine(37) in tRNA + (sulfur carrier)-SH + AH2 + S-adenosyl-L-methionine = 2-thio-N(6)-dimethylallyladenosine(37) in tRNA + (sulfur carrier)-H + 5'-deoxyadenosine + L-methionine + A + H(+). It carries out the reaction 2-thio-N(6)-dimethylallyladenosine(37) in tRNA + S-adenosyl-L-methionine = 2-methylsulfanyl-N(6)-dimethylallyladenosine(37) in tRNA + S-adenosyl-L-homocysteine + H(+). Its function is as follows. Catalyzes the methylthiolation of N6-(dimethylallyl)adenosine (i(6)A), leading to the formation of 2-methylthio-N6-(dimethylallyl)adenosine (ms(2)i(6)A) at position 37 in tRNAs that read codons beginning with uridine. The polypeptide is tRNA-2-methylthio-N(6)-dimethylallyladenosine synthase (Bacillus subtilis (strain 168)).